Reading from the N-terminus, the 643-residue chain is Phosphatidylinositol-3,5-bisphosphate 3-phosphatase MTMR2 (643 aa).

Residues 1 to 52 (MEKSSSCESLGAQLPAARLPSEDSLSSASTSHSENSVHTKSASAISSDSIST) form a disordered region. Phosphoserine is present on residues Ser-6 and Ser-9. Positions 23–40 (DSLSSASTSHSENSVHTK) are enriched in polar residues. Positions 41–52 (SASAISSDSIST) are enriched in low complexity. Ser-58 carries the phosphoserine modification. Residues 68–139 (NKLAEMEEPA…GVISRVEKIG (72 aa)) enclose the GRAM domain. One can recognise a Myotubularin phosphatase domain in the interval 205–580 (GWKLYDPLLE…RHLELWVGYY (376 aa)). A 1,2-diacyl-sn-glycero-3-phospho-(1D-myo-inositol-3,5-bisphosphate)-binding residues include Asn-330, Asn-355, and Ile-356. Residues Asn-330, Asn-355, and Ile-356 each coordinate a 1,2-diacyl-sn-glycero-3-phospho-(1D-myo-inositol-3-phosphate). Residue Cys-417 is the Phosphocysteine intermediate of the active site. Residues Ser-418, Asp-419, Gly-420, Trp-421, Asp-422, Arg-423, Arg-459, and Arg-463 each coordinate a 1,2-diacyl-sn-glycero-3-phospho-(1D-myo-inositol-3,5-bisphosphate). The a 1,2-diacyl-sn-glycero-3-phospho-(1D-myo-inositol-3-phosphate) site is built by Ser-418, Asp-419, Gly-420, Trp-421, Asp-422, and Arg-423. Arg-463 is a binding site for a 1,2-diacyl-sn-glycero-3-phospho-(1D-myo-inositol-3-phosphate). Residues 593–627 (IHSRYKELLAKRAELQRKVEELQREISNRSTSSSE) are a coiled coil. Residues 614–643 (LQREISNRSTSSSERASSPAQCVTPVQTVV) are disordered. Over residues 620 to 631 (NRSTSSSERASS) the composition is skewed to low complexity. Positions 632-643 (PAQCVTPVQTVV) are enriched in polar residues.

Belongs to the protein-tyrosine phosphatase family. Non-receptor class myotubularin subfamily. Homodimer (via coiled-coil domain). Heterotetramer consisting of one MTMR2 dimer and one SBF2/MTMR13 dimer; specifically in peripheral nerves stabilizes SBF2/MTMR13 at the membranes and increases MTMR2 catalytic activity towards phosphatidylinositol 3,5-bisphosphate and to a lesser extent towards phosphatidylinositol 3-phosphate. Heterodimer with SBF1/MTMR5; acts as an adapter for the phosphatase MTMR2 to regulate MTMR2 catalytic activity and subcellular location. Heterodimer with MTMR12. In terms of processing, phosphorylation at Ser-58 decreases MTMR2 localization to endocytic vesicular structures. In terms of tissue distribution, expressed in sciatic nerve and in Schwann cells (at protein level). Detected in adult dorsal root ganglia, neurons of the central nervous system, motor neurons, cell soma and neurites of sensory neurons, olfactory bulb, cerebellum and hippocampus.

The protein resides in the cytoplasm. Its subcellular location is the early endosome membrane. It localises to the perinuclear region. It is found in the cell projection. The protein localises to the axon. The protein resides in the endosome membrane. The catalysed reaction is a 1,2-diacyl-sn-glycero-3-phospho-(1D-myo-inositol-3,5-bisphosphate) + H2O = a 1,2-diacyl-sn-glycero-3-phospho-(1D-myo-inositol-5-phosphate) + phosphate. It catalyses the reaction a 1,2-diacyl-sn-glycero-3-phospho-(1D-myo-inositol-3-phosphate) + H2O = a 1,2-diacyl-sn-glycero-3-phospho-(1D-myo-inositol) + phosphate. The enzyme catalyses 1,2-dioctanoyl-sn-glycero-3-phospho-(1-D-myo-inositol-3-phosphate) + H2O = 1,2-dioctanoyl-sn-glycero-3-phospho-(1D-myo-inositol) + phosphate. It carries out the reaction 1,2-dioctanoyl-sn-glycero-3-phospho-(1D-myo-inositol-3,5-bisphosphate) + H2O = 1,2-dioctanoyl-sn-glycero-3-phospho-(1D-myo-inositol-5-phosphate) + phosphate. In terms of biological role, lipid phosphatase that specifically dephosphorylates the D-3 position of phosphatidylinositol 3-phosphate and phosphatidylinositol 3,5-bisphosphate, generating phosphatidylinositol and phosphatidylinositol 5-phosphate. Regulates the level of these phosphoinositides critical for various biological processes including autophagy initiation and autophagosome maturation. The chain is Phosphatidylinositol-3,5-bisphosphate 3-phosphatase MTMR2 from Mus musculus (Mouse).